Here is an 84-residue protein sequence, read N- to C-terminus: Small ribosomal subunit protein uS17 (84 aa).

It belongs to the universal ribosomal protein uS17 family. As to quaternary structure, part of the 30S ribosomal subunit.

In terms of biological role, one of the primary rRNA binding proteins, it binds specifically to the 5'-end of 16S ribosomal RNA. This is Small ribosomal subunit protein uS17 from Clostridium botulinum (strain ATCC 19397 / Type A).